We begin with the raw amino-acid sequence, 462 residues long: Cysteine--tRNA ligase (462 aa).

A Zn(2+)-binding site is contributed by C29. A 'HIGH' region motif is present at residues 31 to 41 (PTVYDHAHIGN). Zn(2+)-binding residues include C214, H239, and E243. Residues 272 to 276 (KMSKS) carry the 'KMSKS' region motif. K275 is an ATP binding site.

Belongs to the class-I aminoacyl-tRNA synthetase family. Monomer. It depends on Zn(2+) as a cofactor.

The protein resides in the cytoplasm. It catalyses the reaction tRNA(Cys) + L-cysteine + ATP = L-cysteinyl-tRNA(Cys) + AMP + diphosphate. The sequence is that of Cysteine--tRNA ligase from Xanthobacter autotrophicus (strain ATCC BAA-1158 / Py2).